A 392-amino-acid polypeptide reads, in one-letter code: Succinyl-diaminopimelate desuccinylase (392 aa).

His-75 contacts Zn(2+). Residue Asp-77 is part of the active site. Residue Asp-108 coordinates Zn(2+). Glu-147 functions as the Proton acceptor in the catalytic mechanism. Glu-148, Glu-176, and His-365 together coordinate Zn(2+).

The protein belongs to the peptidase M20A family. DapE subfamily. In terms of assembly, homodimer. Zn(2+) is required as a cofactor. Co(2+) serves as cofactor.

The catalysed reaction is N-succinyl-(2S,6S)-2,6-diaminopimelate + H2O = (2S,6S)-2,6-diaminopimelate + succinate. The protein operates within amino-acid biosynthesis; L-lysine biosynthesis via DAP pathway; LL-2,6-diaminopimelate from (S)-tetrahydrodipicolinate (succinylase route): step 3/3. Functionally, catalyzes the hydrolysis of N-succinyl-L,L-diaminopimelic acid (SDAP), forming succinate and LL-2,6-diaminopimelate (DAP), an intermediate involved in the bacterial biosynthesis of lysine and meso-diaminopimelic acid, an essential component of bacterial cell walls. The sequence is that of Succinyl-diaminopimelate desuccinylase from Rhodopseudomonas palustris (strain BisB18).